Here is a 203-residue protein sequence, read N- to C-terminus: Dephospho-CoA kinase (203 aa).

Residues 5–203 (IVGLTGGIAS…VVYRVAASEH (199 aa)) enclose the DPCK domain. An ATP-binding site is contributed by 13–18 (ASGKSA).

Belongs to the CoaE family.

The protein resides in the cytoplasm. It carries out the reaction 3'-dephospho-CoA + ATP = ADP + CoA + H(+). Its pathway is cofactor biosynthesis; coenzyme A biosynthesis; CoA from (R)-pantothenate: step 5/5. Its function is as follows. Catalyzes the phosphorylation of the 3'-hydroxyl group of dephosphocoenzyme A to form coenzyme A. The sequence is that of Dephospho-CoA kinase from Xanthomonas euvesicatoria pv. vesicatoria (strain 85-10) (Xanthomonas campestris pv. vesicatoria).